A 1068-amino-acid chain; its full sequence is tRNA wybutosine-synthesizing protein 4 (1068 aa).

Positions Met-1 to Ser-31 are disordered. S-adenosyl-L-methionine-binding positions include Arg-81, Gly-107, Asp-134, Asp-181–Leu-182, and Glu-208. Residues Ala-876–Arg-1024 enclose the JmjC domain.

The protein belongs to the methyltransferase superfamily. LCMT family.

It catalyses the reaction 7-[(3S)-3-amino-3-carboxypropyl]wyosine(37) in tRNA(Phe) + S-adenosyl-L-methionine = 7-[(3S)-(3-amino-3-methoxycarbonyl)propyl]wyosine(37) in tRNA(Phe) + S-adenosyl-L-homocysteine. It carries out the reaction 7-[(3S)-(3-amino-3-methoxycarbonyl)propyl]wyosine(37) in tRNA(Phe) + S-adenosyl-L-methionine + CO2 = wybutosine(37) in tRNA(Phe) + S-adenosyl-L-homocysteine + 2 H(+). It participates in tRNA modification; wybutosine-tRNA(Phe) biosynthesis. In terms of biological role, probable S-adenosyl-L-methionine-dependent methyltransferase that acts as a component of the wybutosine biosynthesis pathway. Wybutosine is a hyper modified guanosine with a tricyclic base found at the 3'-position adjacent to the anticodon of eukaryotic phenylalanine tRNA. May methylate the carboxyl group of leucine residues to form alpha-leucine ester residues. This Emericella nidulans (strain FGSC A4 / ATCC 38163 / CBS 112.46 / NRRL 194 / M139) (Aspergillus nidulans) protein is tRNA wybutosine-synthesizing protein 4 (ppm2).